The chain runs to 92 residues: Small ribosomal subunit protein bS20 (92 aa).

The disordered stretch occupies residues Met-1 to Ser-23. The span at Ala-7–His-20 shows a compositional bias: basic residues.

The protein belongs to the bacterial ribosomal protein bS20 family.

Functionally, binds directly to 16S ribosomal RNA. This chain is Small ribosomal subunit protein bS20, found in Pseudomonas fluorescens (strain ATCC BAA-477 / NRRL B-23932 / Pf-5).